The following is a 370-amino-acid chain: Cyclic AMP-responsive element-binding protein 3-like protein 4 (370 aa).

Residues 1 to 55 (MELGCPELLEPPEDIFSTGSFLELGFNGPASKVPVTRGLQKSEPDDFLNLFIDPN) are required for transcriptional activation. At 1 to 271 (MELGCPELLE…QTSSRAAQTS (271 aa)) the chain is on the cytoplasmic side. Residues 61–85 (ETSPGRDSGVSEDPGSPAQQASSSP) form a disordered region. Over residues 76 to 85 (SPAQQASSSP) the composition is skewed to low complexity. The 64-residue stretch at 193-256 (ILKKIRRKIR…IFLMEQVRQL (64 aa)) folds into the bZIP domain. The tract at residues 195–234 (KKIRRKIRNKQSAQDSRRRKKEYLDGLESRVAACSEQNQK) is basic motif. Positions 235–256 (LQRKVQELERQNIFLMEQVRQL) are leucine-zipper. The helical; Signal-anchor for type II membrane protein transmembrane segment at 272 to 292 (TCVLILLFSLALIILPSFSPF) threads the bilayer. Topologically, residues 293 to 370 (QGQSEARPED…IRGMVHTDEM (78 aa)) are lumenal. Asn318 and Asn342 each carry an N-linked (GlcNAc...) asparagine glycan.

The protein belongs to the bZIP family. ATF subfamily. In terms of assembly, binds DNA as a dimer. Forms a heterodimer with CREM isoform Tau. In terms of processing, controlled by regulated intramembrane proteolysis (RIP). Following ER stress a fragment containing the cytoplasmic transcription factor domain is released by proteolysis. The cleavage seems to be performed sequentially by site-1 and site-2 proteases (PS1 and PS2). PS1 cleavage may be suppressed by a determinant in the C-terminal region. In terms of tissue distribution, predominantly expressed at high levels in testis with isoform 2 being the predominant isoform. Specifically expressed in postmeiotic spermatids and accumulates in the mid/late stage (at protein level). Ubiquitously expressed at low levels.

It localises to the endoplasmic reticulum membrane. The protein localises to the cytoplasmic vesicle. Its subcellular location is the secretory vesicle. The protein resides in the acrosome inner membrane. It is found in the nucleus. In terms of biological role, transcriptional activator that may play a role in the unfolded protein response of the testis. Proposed to be involved in spermiogenesis. May be involved in regulating the maturation of sperm head nuclei. Alternatively proposed to be a paternally delivered transcription factor that may function in early zygotic gene activation. Increases the binding of CREM isoform Tau with CRE. The CREM isoform Tau-CREB3L4 heterodimer functions through CRE but not through UPRE and may recruit HIRA to CRE to regulate histone exchange. The chain is Cyclic AMP-responsive element-binding protein 3-like protein 4 (Creb3l4) from Mus musculus (Mouse).